The chain runs to 429 residues: D-amino acid dehydrogenase (429 aa).

Residue 3 to 17 participates in FAD binding; sequence VLILGSGVIGTTTAW.

This sequence belongs to the DadA oxidoreductase family. FAD is required as a cofactor.

It catalyses the reaction a D-alpha-amino acid + A + H2O = a 2-oxocarboxylate + AH2 + NH4(+). The protein operates within amino-acid degradation; D-alanine degradation; NH(3) and pyruvate from D-alanine: step 1/1. Its function is as follows. Oxidative deamination of D-amino acids. The sequence is that of D-amino acid dehydrogenase from Xanthomonas campestris pv. campestris (strain 8004).